Consider the following 382-residue polypeptide: POU domain, class 3, transcription factor 2-A (382 aa).

3 disordered regions span residues 69–136 (PWAT…SSNG), 150–206 (GMIN…TPTS), and 348–382 (EKRM…TSVQ). The segment covering 122 to 136 (STGSTHLSSMASSNG) has biased composition (polar residues). Residues 165–178 (LRDSHDDHHGDHGH) are compositionally biased toward basic and acidic residues. Residues 179–194 (QQVSQAQQQHSQLQGG) are compositionally biased toward low complexity. The 75-residue stretch at 201–275 (EDTPTSDDLE…LLNKWLEEAD (75 aa)) folds into the POU-specific domain. The homeobox DNA-binding region spans 293-352 (KRKKRTSIEVSVKGALESHFLKCPKPSAPEITSLADSLQLEKEVVRVWFCNRRQKEKRMT).

It belongs to the POU transcription factor family. Class-3 subfamily. Expressed in the developing brain and spinal cord. Also found in a restricted region of the auditory vesicle during development. In the adult, expression is restricted to the brain.

The protein localises to the nucleus. Its function is as follows. Transcription factor that may be implicated in patterning of the central nervous system during early development. The chain is POU domain, class 3, transcription factor 2-A (pou3f2-a) from Xenopus laevis (African clawed frog).